Consider the following 884-residue polypeptide: Translation initiation factor IF-2 (884 aa).

The disordered stretch occupies residues 58-248; the sequence is PEKVEQKRVR…GKTESVETEE (191 aa). The span at 66–77 shows a compositional bias: basic residues; it reads VRSNVIRKRRQP. A compositionally biased stretch (low complexity) spans 87–106; that stretch reads EAPAAQAPEAEEVTAPTAEE. Positions 172–183 are enriched in basic residues; that stretch reads SRKKAKAKKHQA. The span at 207 to 223 shows a compositional bias: low complexity; that stretch reads DTAPADSPAAPAAATPA. The span at 229–239 shows a compositional bias: basic residues; it reads KPSRKDRKKRG. The tr-type G domain occupies 384–553; it reads KRAPVVTIMG…LLQAEMLELK (170 aa). The G1 stretch occupies residues 393–400; the sequence is GHVDHGKT. 393–400 contacts GTP; that stretch reads GHVDHGKT. The interval 418–422 is G2; that stretch reads GITQH. Residues 439–442 form a G3 region; that stretch reads DTPG. GTP is bound by residues 439–443 and 493–496; these read DTPGH and NKID. The segment at 493-496 is G4; it reads NKID. Residues 529 to 531 are G5; the sequence is SAK.

This sequence belongs to the TRAFAC class translation factor GTPase superfamily. Classic translation factor GTPase family. IF-2 subfamily.

It is found in the cytoplasm. In terms of biological role, one of the essential components for the initiation of protein synthesis. Protects formylmethionyl-tRNA from spontaneous hydrolysis and promotes its binding to the 30S ribosomal subunits. Also involved in the hydrolysis of GTP during the formation of the 70S ribosomal complex. The sequence is that of Translation initiation factor IF-2 from Desulfosudis oleivorans (strain DSM 6200 / JCM 39069 / Hxd3) (Desulfococcus oleovorans).